Here is a 568-residue protein sequence, read N- to C-terminus: Mannitol 2-dehydrogenase (568 aa).

Residue 109-120 (IVHVGVGGFHRA) coordinates NAD(+).

It belongs to the mannitol dehydrogenase family. As to quaternary structure, monomer.

The catalysed reaction is D-mannitol + NAD(+) = D-fructose + NADH + H(+). In terms of biological role, catalyzes the NAD(H)-dependent interconversion of D-fructose and D-mannitol in the mannitol metabolic pathway. This chain is Mannitol 2-dehydrogenase, found in Phaeosphaeria nodorum (strain SN15 / ATCC MYA-4574 / FGSC 10173) (Glume blotch fungus).